The sequence spans 268 residues: Ribosomal RNA small subunit methyltransferase A (268 aa).

Asn-18, Leu-20, Gly-45, Glu-66, Asp-91, and Asn-112 together coordinate S-adenosyl-L-methionine.

This sequence belongs to the class I-like SAM-binding methyltransferase superfamily. rRNA adenine N(6)-methyltransferase family. RsmA subfamily.

It localises to the cytoplasm. It catalyses the reaction adenosine(1518)/adenosine(1519) in 16S rRNA + 4 S-adenosyl-L-methionine = N(6)-dimethyladenosine(1518)/N(6)-dimethyladenosine(1519) in 16S rRNA + 4 S-adenosyl-L-homocysteine + 4 H(+). In terms of biological role, specifically dimethylates two adjacent adenosines (A1518 and A1519) in the loop of a conserved hairpin near the 3'-end of 16S rRNA in the 30S particle. May play a critical role in biogenesis of 30S subunits. The protein is Ribosomal RNA small subunit methyltransferase A of Shewanella putrefaciens (strain CN-32 / ATCC BAA-453).